The following is a 225-amino-acid chain: UPF0173 metal-dependent hydrolase PH1671 (225 aa).

This sequence belongs to the UPF0173 family.

This Pyrococcus horikoshii (strain ATCC 700860 / DSM 12428 / JCM 9974 / NBRC 100139 / OT-3) protein is UPF0173 metal-dependent hydrolase PH1671.